A 593-amino-acid polypeptide reads, in one-letter code: ESX-1 secretion system protein EccCb1 (593 aa).

2 consecutive FtsK domains span residues 66–260 (RQEV…NETQ) and 350–546 (QVPL…EKND). ATP contacts are provided by residues 85–92 (GAPQTGKS) and 377–384 (GAPKSGKT).

In terms of assembly, part of the ESX-1 / type VII secretion system (T7SS), which is composed of cytosolic and membrane components. The ESX-1 membrane complex is composed of EccB1, EccCa1, EccCb1, EccD1 and EccE1.

The protein localises to the cytoplasm. Functionally, part of the ESX-1 / type VII specialized secretion system (T7SS), which exports several proteins including EsxA and EsxB. Plays a role in DNA conjugation, in both donor and recipient strains. This chain is ESX-1 secretion system protein EccCb1, found in Mycolicibacterium smegmatis (strain ATCC 700084 / mc(2)155) (Mycobacterium smegmatis).